A 285-amino-acid polypeptide reads, in one-letter code: RNase adapter protein RapZ (285 aa).

8 to 15 (GRSGSGKS) provides a ligand contact to ATP. A GTP-binding site is contributed by 56–59 (DVRN). Positions 266-285 (RSRGKNVQSRHRTLEKRKPS) are RNA-binding.

Belongs to the RapZ-like family. RapZ subfamily. Homotrimer.

Functionally, modulates the synthesis of GlmS, by affecting the processing and stability of the regulatory small RNA GlmZ. When glucosamine-6-phosphate (GlcN6P) concentrations are high in the cell, RapZ binds GlmZ and targets it to cleavage by RNase E. Consequently, GlmZ is inactivated and unable to activate GlmS synthesis. Under low GlcN6P concentrations, RapZ is sequestered and inactivated by an other regulatory small RNA, GlmY, preventing GlmZ degradation and leading to synthesis of GlmS. The chain is RNase adapter protein RapZ from Pectobacterium atrosepticum (strain SCRI 1043 / ATCC BAA-672) (Erwinia carotovora subsp. atroseptica).